A 177-amino-acid chain; its full sequence is Putative adenylate kinase (177 aa).

Positions 10, 12, 13, 14, and 15 each coordinate ATP. The tract at residues 30-50 (SLRDYAIEKGIGEMKGDELEV) is NMP. The tract at residues 99–109 (ERGYSREKVGE) is LID. ATP-binding residues include R100 and K138.

The protein belongs to the adenylate kinase family. AK6 subfamily. As to quaternary structure, interacts with uS11. Not a structural component of 40S pre-ribosomes, but transiently interacts with them by binding to uS11.

The enzyme catalyses AMP + ATP = 2 ADP. It catalyses the reaction ATP + H2O = ADP + phosphate + H(+). Functionally, broad-specificity nucleoside monophosphate (NMP) kinase that catalyzes the reversible transfer of the terminal phosphate group between nucleoside triphosphates and monophosphates. Also has ATPase activity. Involved in the late maturation steps of the 30S ribosomal particles, specifically 16S rRNA maturation. While NMP activity is not required for ribosome maturation, ATPase activity is. Associates transiently with small ribosomal subunit protein uS11. ATP hydrolysis breaks the interaction with uS11. May temporarily remove uS11 from the ribosome to enable a conformational change of the ribosomal RNA that is needed for the final maturation step of the small ribosomal subunit. The sequence is that of Putative adenylate kinase from Thermococcus gammatolerans (strain DSM 15229 / JCM 11827 / EJ3).